We begin with the raw amino-acid sequence, 285 residues long: Probable endonuclease 4 (285 aa).

Zn(2+)-binding residues include His69, His109, Glu145, Asp179, His182, His216, Asp229, His231, and Glu261.

Belongs to the AP endonuclease 2 family. The cofactor is Zn(2+).

It catalyses the reaction Endonucleolytic cleavage to 5'-phosphooligonucleotide end-products.. Its function is as follows. Endonuclease IV plays a role in DNA repair. It cleaves phosphodiester bonds at apurinic or apyrimidinic (AP) sites, generating a 3'-hydroxyl group and a 5'-terminal sugar phosphate. This is Probable endonuclease 4 from Shigella boydii serotype 4 (strain Sb227).